The following is a 154-amino-acid chain: 6,7-dimethyl-8-ribityllumazine synthase (154 aa).

Residues Phe22, 56–58 (AFE), and 80–82 (TVI) each bind 5-amino-6-(D-ribitylamino)uracil. (2S)-2-hydroxy-3-oxobutyl phosphate is bound at residue 85–86 (ST). The active-site Proton donor is the His88. Residue Phe113 participates in 5-amino-6-(D-ribitylamino)uracil binding. Arg127 contributes to the (2S)-2-hydroxy-3-oxobutyl phosphate binding site.

It belongs to the DMRL synthase family.

It catalyses the reaction (2S)-2-hydroxy-3-oxobutyl phosphate + 5-amino-6-(D-ribitylamino)uracil = 6,7-dimethyl-8-(1-D-ribityl)lumazine + phosphate + 2 H2O + H(+). It participates in cofactor biosynthesis; riboflavin biosynthesis; riboflavin from 2-hydroxy-3-oxobutyl phosphate and 5-amino-6-(D-ribitylamino)uracil: step 1/2. In terms of biological role, catalyzes the formation of 6,7-dimethyl-8-ribityllumazine by condensation of 5-amino-6-(D-ribitylamino)uracil with 3,4-dihydroxy-2-butanone 4-phosphate. This is the penultimate step in the biosynthesis of riboflavin. This is 6,7-dimethyl-8-ribityllumazine synthase from Lactococcus lactis subsp. cremoris (strain MG1363).